Here is a 1083-residue protein sequence, read N- to C-terminus: Carbamoyl phosphate synthase large chain (1083 aa).

Positions Met-1–Glu-402 are carboxyphosphate synthetic domain. 12 residues coordinate ATP: Arg-129, Arg-169, Gly-175, Gly-176, Glu-208, Val-210, Glu-215, Gly-241, Val-242, His-243, Gln-285, and Glu-299. The ATP-grasp 1 domain maps to Lys-133–Leu-328. Gln-285, Glu-299, and Asn-301 together coordinate Mg(2+). Residues Gln-285, Glu-299, and Asn-301 each coordinate Mn(2+). Positions Leu-403–Ala-554 are oligomerization domain. A carbamoyl phosphate synthetic domain region spans residues Pro-555–Gly-937. Residues Ala-679 to Val-871 form the ATP-grasp 2 domain. Residues Arg-715, Arg-754, Leu-756, Glu-761, Gly-787, Val-788, His-789, Ser-790, Gln-830, and Glu-842 each contribute to the ATP site. Mg(2+) is bound by residues Gln-830, Glu-842, and Asn-844. Residues Gln-830, Glu-842, and Asn-844 each contribute to the Mn(2+) site. In terms of domain architecture, MGS-like spans Val-938–Pro-1078. The interval Val-938–Arg-1083 is allosteric domain.

This sequence belongs to the CarB family. Composed of two chains; the small (or glutamine) chain promotes the hydrolysis of glutamine to ammonia, which is used by the large (or ammonia) chain to synthesize carbamoyl phosphate. Tetramer of heterodimers (alpha,beta)4. Mg(2+) serves as cofactor. Mn(2+) is required as a cofactor.

The catalysed reaction is hydrogencarbonate + L-glutamine + 2 ATP + H2O = carbamoyl phosphate + L-glutamate + 2 ADP + phosphate + 2 H(+). The enzyme catalyses hydrogencarbonate + NH4(+) + 2 ATP = carbamoyl phosphate + 2 ADP + phosphate + 2 H(+). It functions in the pathway amino-acid biosynthesis; L-arginine biosynthesis; carbamoyl phosphate from bicarbonate: step 1/1. It participates in pyrimidine metabolism; UMP biosynthesis via de novo pathway; (S)-dihydroorotate from bicarbonate: step 1/3. In terms of biological role, large subunit of the glutamine-dependent carbamoyl phosphate synthetase (CPSase). CPSase catalyzes the formation of carbamoyl phosphate from the ammonia moiety of glutamine, carbonate, and phosphate donated by ATP, constituting the first step of 2 biosynthetic pathways, one leading to arginine and/or urea and the other to pyrimidine nucleotides. The large subunit (synthetase) binds the substrates ammonia (free or transferred from glutamine from the small subunit), hydrogencarbonate and ATP and carries out an ATP-coupled ligase reaction, activating hydrogencarbonate by forming carboxy phosphate which reacts with ammonia to form carbamoyl phosphate. This Myxococcus xanthus (strain DK1622) protein is Carbamoyl phosphate synthase large chain.